The sequence spans 450 residues: 5-amino-6-(D-ribitylamino)uracil--L-tyrosine 4-hydroxyphenyl transferase (450 aa).

The segment at 1–24 (MPDVPETVGTPDGSTEFEHRPTTD) is disordered. Residues 82–350 (VTFVANLNNN…MIAVSRLFLD (269 aa)) enclose the Radical SAM core domain. [4Fe-4S] cluster-binding residues include C96, C100, and C103. Positions 430 to 450 (PDADVLGPQLGPRADGTPLLD) are disordered.

It belongs to the radical SAM superfamily. CofH family. As to quaternary structure, consists of two subunits, CofG and CofH. [4Fe-4S] cluster is required as a cofactor.

The catalysed reaction is 5-amino-6-(D-ribitylamino)uracil + L-tyrosine + S-adenosyl-L-methionine = 5-amino-5-(4-hydroxybenzyl)-6-(D-ribitylimino)-5,6-dihydrouracil + 2-iminoacetate + 5'-deoxyadenosine + L-methionine + H(+). The protein operates within cofactor biosynthesis; coenzyme F0 biosynthesis. Its function is as follows. Catalyzes the radical-mediated synthesis of 5-amino-5-(4-hydroxybenzyl)-6-(D-ribitylimino)-5,6-dihydrouracil from 5-amino-6-(D-ribitylamino)uracil and L-tyrosine. The polypeptide is 5-amino-6-(D-ribitylamino)uracil--L-tyrosine 4-hydroxyphenyl transferase (Haloarcula marismortui (strain ATCC 43049 / DSM 3752 / JCM 8966 / VKM B-1809) (Halobacterium marismortui)).